Reading from the N-terminus, the 88-residue chain is MAHKKAGGSSRNGRDSPGQRRGIKRFGGQKVLAGNILVRQLGTKIHPGENVGMGRDYTLFAKVNGIVTYETYFRKCKRYSRVHIQPTV.

Residues 1-25 (MAHKKAGGSSRNGRDSPGQRRGIKR) form a disordered region.

The protein belongs to the bacterial ribosomal protein bL27 family.

The protein is Large ribosomal subunit protein bL27 (rpmA) of Lawsonia intracellularis.